We begin with the raw amino-acid sequence, 527 residues long: Organic cation/carnitine transporter 2 (527 aa).

Over 1-27 the chain is Cytoplasmic; the sequence is MAEPTQPLLTDSNSSSPRSLDDTIESY. The helical transmembrane segment at 28 to 48 threads the bilayer; that stretch reads IGSFGWAQFLQAALVSFSGVF. The Extracellular segment spans residues 49–119; that stretch reads DAQQTFISVF…SFVKGLPESS (71 aa). The chain crosses the membrane as a helical span at residues 120–140; sequence FFVGCLIGGLVLSTLADSSLG. Topologically, residues 141–149 are cytoplasmic; it reads RKNMLFLSC. Residues 150–170 form a helical membrane-spanning segment; sequence LVMAISTMLTVFSPNIWVYAV. Topologically, residues 171 to 176 are extracellular; that stretch reads LRFVNG. A helical transmembrane segment spans residues 177–195; the sequence is FGRATIGTCALVLSTELVG. 190–197 serves as a coordination point for ATP; sequence STELVGKK. Topologically, residues 196–201 are cytoplasmic; sequence KKWRGR. A helical membrane pass occupies residues 202-222; the sequence is VGIMSFFGFMLGFLSLPLMAY. Residues 223-230 are Extracellular-facing; that stretch reads MNRGSSWR. Residues 231 to 251 form a helical membrane-spanning segment; that stretch reads ILYAWTSIPTIIYCVLVRFFV. The Cytoplasmic portion of the chain corresponds to 252 to 326; the sequence is CESPRWLFVR…LVEKRWALKR (75 aa). The chain crosses the membrane as a helical span at residues 327–347; that stretch reads LSAVMAIAFGIGLVYYGMPLA. At 348–356 the chain is on the extracellular side; the sequence is LSNLDFNIY. A helical transmembrane segment spans residues 357–377; it reads LSAAFNALMDLPANLITLFLV. The Cytoplasmic portion of the chain corresponds to 378–385; it reads DKLSRRNA. A helical membrane pass occupies residues 386-406; sequence LIGFTALGGVSSVLIFALHNM. The Extracellular portion of the chain corresponds to 407–415; the sequence is RIGNHGALQ. Residues 416–436 form a helical membrane-spanning segment; that stretch reads LALELISYFSACSAFNMEMIY. The Cytoplasmic portion of the chain corresponds to 437–448; that stretch reads TIELFPTCVRNS. A helical membrane pass occupies residues 449-469; it reads AIAMARQALVLGGVFSPIMVA. The Extracellular segment spans residues 470 to 475; sequence AGRKNA. The chain crosses the membrane as a helical span at residues 476–496; it reads FWSFGLFGLAIGLLGLFAVGL. Over 497–527 the chain is Cytoplasmic; the sequence is PETRGSDLCDTMDEEECKDRRSKVAVNNVIA.

The protein belongs to the major facilitator (TC 2.A.1) superfamily. Organic cation transporter (TC 2.A.1.19) family. As to expression, weakly expressed in roots, including tips and initiation site of lateral roots, siliques and flowers, especially in pollen and stigma.

The protein localises to the vacuole membrane. Functionally, high affinity carnitine transporter involved in the active cellular uptake of carnitine. Also transports organic cations. This Arabidopsis thaliana (Mouse-ear cress) protein is Organic cation/carnitine transporter 2 (OCT2).